The chain runs to 151 residues: Protein-export protein SecB (151 aa).

Belongs to the SecB family. In terms of assembly, homotetramer, a dimer of dimers. One homotetramer interacts with 1 SecA dimer.

The protein resides in the cytoplasm. One of the proteins required for the normal export of preproteins out of the cell cytoplasm. It is a molecular chaperone that binds to a subset of precursor proteins, maintaining them in a translocation-competent state. It also specifically binds to its receptor SecA. The sequence is that of Protein-export protein SecB from Azoarcus sp. (strain BH72).